A 350-amino-acid chain; its full sequence is LIM domain-containing protein unc-95 (350 aa).

The span at 1–37 (MTISPQPSHQQFESYQWTTESRSSQQRHGTGTPSQDG) shows a compositional bias: polar residues. The tract at residues 1–65 (MTISPQPSHQ…ESRNSNKDKV (65 aa)) is disordered. Over residues 45 to 65 (PVERHVARWRSESRNSNKDKV) the composition is skewed to basic and acidic residues. Residues 83–110 (LTALKNDVEQTTEIIRRKQEQMRMERRQ) adopt a coiled-coil conformation. Disordered stretches follow at residues 177-198 (RRGQ…EIEY), 206-225 (PEEQ…METD), and 235-262 (MSEE…SGSP). Residues 268 to 334 (AVCAYCSEEI…HDCFYKLYNG (67 aa)) form the LIM zinc-binding domain.

In terms of processing, ubiquitinated. Ubiquitination by rnf-5 leads to dissociation from muscle dense bodies during molting and is required for ecdysis. As to expression, expressed in the body wall muscles, vulval muscles and the anal muscles. Expressed in the muscle arms of the head muscle cells that form neuromuscular junctions and in the anal depressor muscle.

Its subcellular location is the cytoplasm. The protein resides in the nucleus. It is found in the cell membrane. It localises to the myofibril. The protein localises to the sarcomere. Its subcellular location is the m line. The protein resides in the cell junction. It is found in the focal adhesion. Required for the assembly and integrity of muscle dense bodies, which establish the adhesion sites of the muscle cells to the extracellular matrix. Decreased localization of unc-95 to dense bodies and their subsequent dissociation plays an important role in ecdysis during molting. Involved in the organization of the muscle sarcomeric structure and thereby required for locomotion. The polypeptide is LIM domain-containing protein unc-95 (Caenorhabditis elegans).